We begin with the raw amino-acid sequence, 491 residues long: MIIETNHACDLVIFGAKGDLTKRKLLPALYKLEKSKKIHKYTRIIASGRADWSTEDYIEKIKTEVKNFLNEEINDLIWKNLSSRIFFCNIDVHEPLHFFRLKTILKQKKNIIVYYCAVPSNTLNSIFIGLGNAHLNSVPSRIVLEKPLGVCLKTSKKINDQISKYFLESQIFRIDHYLGKESILNLFALRFSNTCLFYNWNNKTIDHIQITVSEEVGIEDRWNYFNMMGQMKDMVQNHLLQILTILTMDQPKNISSESIQHEKVKILRSLNPINIHNINKKTVRGQYCSGVINEKKVPSYLEENGANKNSLTETFVAIKVDLNNKQWSGVPFYLRTGKRLAHKYSEIVVFFKKKPTNLFKNLNSELLQNKLIIRLEPNPNIIFDFSVKAPGLEQEYKIENSQLKSSQFSKKYSKNSIDAYERLLFEIMRGVQSLFVCRDEIEAAWKWIDPIIHAWKNSKNNAPQLYMSGTWGPKNSDLLLAHDGRVWYEFH.

Residues arginine 49, 91 to 92, and lysine 146 each bind NADP(+); that span reads DV. Residues histidine 176, lysine 180, glutamate 214, and aspartate 233 each coordinate substrate. Catalysis depends on histidine 238, which acts as the Proton acceptor. Lysine 338 and lysine 343 together coordinate substrate.

It belongs to the glucose-6-phosphate dehydrogenase family.

The catalysed reaction is D-glucose 6-phosphate + NADP(+) = 6-phospho-D-glucono-1,5-lactone + NADPH + H(+). It participates in carbohydrate degradation; pentose phosphate pathway; D-ribulose 5-phosphate from D-glucose 6-phosphate (oxidative stage): step 1/3. Its function is as follows. Catalyzes the oxidation of glucose 6-phosphate to 6-phosphogluconolactone. The chain is Glucose-6-phosphate 1-dehydrogenase from Buchnera aphidicola subsp. Acyrthosiphon pisum (strain APS) (Acyrthosiphon pisum symbiotic bacterium).